A 113-amino-acid chain; its full sequence is Hydrogenase maturation factor HybF (113 aa).

2 residues coordinate Ni(2+): H2 and E3. The Zn(2+) site is built by C73, C76, C89, and C92.

It belongs to the HypA/HybF family. HybF subfamily.

Its function is as follows. Involved in the maturation of [NiFe] hydrogenases. Required for nickel insertion into the metal center of the hydrogenase. The chain is Hydrogenase maturation factor HybF from Escherichia coli O157:H7.